The primary structure comprises 294 residues: Bifunctional protein FolD (294 aa).

NADP(+) contacts are provided by residues 166-168 (GRS), S191, and I232.

The protein belongs to the tetrahydrofolate dehydrogenase/cyclohydrolase family. As to quaternary structure, homodimer.

The enzyme catalyses (6R)-5,10-methylene-5,6,7,8-tetrahydrofolate + NADP(+) = (6R)-5,10-methenyltetrahydrofolate + NADPH. It catalyses the reaction (6R)-5,10-methenyltetrahydrofolate + H2O = (6R)-10-formyltetrahydrofolate + H(+). The protein operates within one-carbon metabolism; tetrahydrofolate interconversion. In terms of biological role, catalyzes the oxidation of 5,10-methylenetetrahydrofolate to 5,10-methenyltetrahydrofolate and then the hydrolysis of 5,10-methenyltetrahydrofolate to 10-formyltetrahydrofolate. This is Bifunctional protein FolD from Nitrobacter hamburgensis (strain DSM 10229 / NCIMB 13809 / X14).